The sequence spans 298 residues: Probable 2-(5''-triphosphoribosyl)-3'-dephosphocoenzyme-A synthase 2 (298 aa).

This sequence belongs to the CitG/MdcB family.

The enzyme catalyses 3'-dephospho-CoA + ATP = 2'-(5''-triphospho-alpha-D-ribosyl)-3'-dephospho-CoA + adenine. The polypeptide is Probable 2-(5''-triphosphoribosyl)-3'-dephosphocoenzyme-A synthase 2 (Salmonella choleraesuis (strain SC-B67)).